We begin with the raw amino-acid sequence, 803 residues long: Subtilisin-like protease SBT5.5 (803 aa).

Positions 1–22 are cleaved as a signal peptide; the sequence is MKRIFGIFIFLSLLLFLVPLLA. Residues 23–112 constitute a propeptide, activation peptide; it reads SCTKEKQVYI…KSDPRKYKIH (90 aa). In terms of domain architecture, Inhibitor I9 spans 30–108; it reads VYIVYFGEHK…VSVFKSDPRK (79 aa). One can recognise a Peptidase S8 domain in the interval 140 to 656; sequence KYDVNDRFRV…SRHFRPTKAA (517 aa). Asp169 (charge relay system) is an active-site residue. N-linked (GlcNAc...) asparagine glycosylation occurs at Asn202. His244 (charge relay system) is an active-site residue. In terms of domain architecture, PA spans 409–504; sequence YAPLVYAPDV…VFSSTVDRIL (96 aa). Ser589 serves as the catalytic Charge relay system. Residue Asn725 is glycosylated (N-linked (GlcNAc...) asparagine).

It belongs to the peptidase S8 family.

The protein localises to the secreted. The protein is Subtilisin-like protease SBT5.5 of Arabidopsis thaliana (Mouse-ear cress).